The following is a 331-amino-acid chain: NADH-quinone oxidoreductase subunit H (331 aa).

The next 8 helical transmembrane spans lie at 7 to 27 (ALVTIILTVVKAIVVLLAVVI), 81 to 101 (MIFTLAPVIAMGALLVAFAIV), 114 to 134 (IGILFFFAMAGLTVYAVLFAG), 154 to 174 (ISYEVFLALSLMGIVAQVGSF), 187 to 207 (VWFIIPQFFGFCTFIIAGVAV), 238 to 258 (FFVGEYIGIVLVSALLATLFF), 271 to 291 (WLSFFYFAAKTGFFIMLFILI), and 310 to 330 (VCLPLTLINLLVTGALVLAAA).

Belongs to the complex I subunit 1 family. As to quaternary structure, NDH-1 is composed of 13 different subunits. Subunits NuoA, H, J, K, L, M, N constitute the membrane sector of the complex.

It localises to the cell inner membrane. The catalysed reaction is a quinone + NADH + 5 H(+)(in) = a quinol + NAD(+) + 4 H(+)(out). Its function is as follows. NDH-1 shuttles electrons from NADH, via FMN and iron-sulfur (Fe-S) centers, to quinones in the respiratory chain. The immediate electron acceptor for the enzyme in this species is believed to be ubiquinone. Couples the redox reaction to proton translocation (for every two electrons transferred, four hydrogen ions are translocated across the cytoplasmic membrane), and thus conserves the redox energy in a proton gradient. This subunit may bind ubiquinone. This is NADH-quinone oxidoreductase subunit H from Pseudomonas aeruginosa (strain ATCC 15692 / DSM 22644 / CIP 104116 / JCM 14847 / LMG 12228 / 1C / PRS 101 / PAO1).